A 138-amino-acid chain; its full sequence is Large ribosomal subunit protein uL16 (138 aa).

Residues 1-19 show a composition bias toward basic residues; that stretch reads MLIPRKVKHRKQHHPKKKG. The interval 1-24 is disordered; that stretch reads MLIPRKVKHRKQHHPKKKGTASGG.

Belongs to the universal ribosomal protein uL16 family. In terms of assembly, part of the 50S ribosomal subunit.

Binds 23S rRNA and is also seen to make contacts with the A and possibly P site tRNAs. The protein is Large ribosomal subunit protein uL16 of Mycobacteroides abscessus (strain ATCC 19977 / DSM 44196 / CCUG 20993 / CIP 104536 / JCM 13569 / NCTC 13031 / TMC 1543 / L948) (Mycobacterium abscessus).